The sequence spans 134 residues: MTKPIEGVVIGFDFGLKRIGVAIGQTITRTATPEAIVASKDGKPDWEHISRLFEEWKPSAIVVGLPMRLNGEEQALTQPARKFGQRLSGRYQRPVYYIEEQLSSIEAEQRKTKTDQPMDDHAAQIILENWLDAL.

The protein belongs to the YqgF nuclease family.

Its subcellular location is the cytoplasm. In terms of biological role, could be a nuclease involved in processing of the 5'-end of pre-16S rRNA. In Hydrogenovibrio crunogenus (strain DSM 25203 / XCL-2) (Thiomicrospira crunogena), this protein is Putative pre-16S rRNA nuclease.